The sequence spans 445 residues: Argininosuccinate synthase (445 aa).

ATP contacts are provided by residues 17-25 (AFSGGLDTS) and alanine 43. Residue tyrosine 99 participates in L-citrulline binding. ATP contacts are provided by glycine 129 and threonine 131. The L-aspartate site is built by threonine 131, asparagine 135, and aspartate 136. Residue asparagine 135 participates in L-citrulline binding. Position 136 (aspartate 136) interacts with ATP. L-citrulline is bound by residues arginine 139 and serine 192. Aspartate 194 lines the ATP pocket. Positions 201, 203, and 280 each coordinate L-citrulline.

Belongs to the argininosuccinate synthase family. Type 2 subfamily. As to quaternary structure, homotetramer.

Its subcellular location is the cytoplasm. The enzyme catalyses L-citrulline + L-aspartate + ATP = 2-(N(omega)-L-arginino)succinate + AMP + diphosphate + H(+). It participates in amino-acid biosynthesis; L-arginine biosynthesis; L-arginine from L-ornithine and carbamoyl phosphate: step 2/3. This is Argininosuccinate synthase from Acidobacterium capsulatum (strain ATCC 51196 / DSM 11244 / BCRC 80197 / JCM 7670 / NBRC 15755 / NCIMB 13165 / 161).